The primary structure comprises 518 residues: Adenine deaminase (518 aa).

This sequence belongs to the metallo-dependent hydrolases superfamily. Adenine deaminase family. Requires Mn(2+) as cofactor.

It catalyses the reaction adenine + H2O + H(+) = hypoxanthine + NH4(+). This is Adenine deaminase from Methanoculleus marisnigri (strain ATCC 35101 / DSM 1498 / JR1).